A 188-amino-acid polypeptide reads, in one-letter code: Ribosome-recycling factor (188 aa).

It belongs to the RRF family.

The protein resides in the cytoplasm. Its function is as follows. Responsible for the release of ribosomes from messenger RNA at the termination of protein biosynthesis. May increase the efficiency of translation by recycling ribosomes from one round of translation to another. In Acidiphilium cryptum (strain JF-5), this protein is Ribosome-recycling factor.